The chain runs to 548 residues: Methyl-accepting chemotaxis protein HlyB (548 aa).

At 1–10 the chain is on the cytoplasmic side; it reads MIINKFSLKW. The chain crosses the membrane as a helical span at residues 11–31; it reads MLAIAVAIPAIALLFVAFTSL. Over 32 to 199 the chain is Periplasmic; it reads NTMSVMQAQS…SFEAGRTKQM (168 aa). A helical membrane pass occupies residues 200 to 220; that stretch reads VIIAAGLIISFITSLVIITNL. One can recognise an HAMP domain in the interval 218–271; that stretch reads TNLRSRVAYLKDRMSSAAANLSLRTRLELDGNDELCDIGKSFNAFIDKVHHSIE. Residues 221–548 lie on the Cytoplasmic side of the membrane; that stretch reads RSRVAYLKDR…LDKLVGSFEL (328 aa). A Methyl-accepting transducer domain is found at 276 to 512; the sequence is NSKELATMAS…DINRNVEDIN (237 aa).

Belongs to the methyl-accepting chemotaxis (MCP) protein family.

It is found in the cell inner membrane. In terms of biological role, chemotactic-signal transducers respond to changes in the concentration of attractants and repellents in the environment, transduce a signal from the outside to the inside of the cell, and facilitate sensory adaptation through the variation of the level of methylation. This is Methyl-accepting chemotaxis protein HlyB (hlyB) from Vibrio cholerae serotype O1 (strain ATCC 39315 / El Tor Inaba N16961).